The chain runs to 349 residues: uncharacterized protein (349 aa).

This is an uncharacterized protein from Escherichia coli (strain K12).